A 451-amino-acid chain; its full sequence is Mannan endo-1,6-alpha-mannosidase DCW1 (451 aa).

The N-terminal stretch at 1–21 is a signal peptide; it reads MLAVTFTAAAVLSLLAASGRT. N-linked (GlcNAc...) asparagine glycans are attached at residues asparagine 84, asparagine 109, asparagine 203, asparagine 242, asparagine 267, and asparagine 291. The tract at residues 397 to 419 is disordered; that stretch reads AMNGGTSPGDPAAGTKTKAENLP. Aspartate 427 carries GPI-anchor amidated aspartate lipidation. A propeptide spans 428–451 (removed in mature form); it reads RAGAGIITALIGSSFLACTLWLII.

The protein belongs to the glycosyl hydrolase 76 family.

The protein resides in the secreted. It localises to the cell wall. The protein localises to the cell membrane. The catalysed reaction is Random hydrolysis of (1-&gt;6)-alpha-D-mannosidic linkages in unbranched (1-&gt;6)-mannans.. Required for normal synthesis of the cell wall. The chain is Mannan endo-1,6-alpha-mannosidase DCW1 (DCW1) from Eremothecium gossypii (strain ATCC 10895 / CBS 109.51 / FGSC 9923 / NRRL Y-1056) (Yeast).